We begin with the raw amino-acid sequence, 528 residues long: Bifunctional pantoate ligase/cytidylate kinase (528 aa).

Residues 1–293 form a pantoate--beta-alanine ligase region; sequence MRLFTTIAGL…IGSCRLIDNI (293 aa). 34–41 is an ATP binding site; sequence MGALHKGH. Residue histidine 41 is the Proton donor of the active site. Glutamine 65 contacts (R)-pantoate. Residue glutamine 65 coordinates beta-alanine. Residue 160–163 coordinates ATP; sequence GQKD. Glutamine 166 is a binding site for (R)-pantoate. ATP contacts are provided by residues isoleucine 189 and 197 to 200; that span reads ISSR. Residues 294–528 are cytidylate kinase; that stretch reads LLRNRKPIIA…YGKSSVNNII (235 aa).

This sequence in the N-terminal section; belongs to the pantothenate synthetase family. In the C-terminal section; belongs to the cytidylate kinase family. Type 1 subfamily.

It is found in the cytoplasm. It catalyses the reaction (R)-pantoate + beta-alanine + ATP = (R)-pantothenate + AMP + diphosphate + H(+). The enzyme catalyses CMP + ATP = CDP + ADP. It carries out the reaction dCMP + ATP = dCDP + ADP. It functions in the pathway cofactor biosynthesis; (R)-pantothenate biosynthesis; (R)-pantothenate from (R)-pantoate and beta-alanine: step 1/1. Catalyzes the condensation of pantoate with beta-alanine in an ATP-dependent reaction via a pantoyl-adenylate intermediate. Functionally, catalyzes the transfer of a phosphate group from ATP to either CMP or dCMP to form CDP or dCDP and ADP, respectively. The chain is Bifunctional pantoate ligase/cytidylate kinase from Trichodesmium erythraeum (strain IMS101).